The chain runs to 954 residues: Glycine dehydrogenase (decarboxylating) (954 aa).

At Lys704 the chain carries N6-(pyridoxal phosphate)lysine.

It belongs to the GcvP family. As to quaternary structure, the glycine cleavage system is composed of four proteins: P, T, L and H. It depends on pyridoxal 5'-phosphate as a cofactor.

It carries out the reaction N(6)-[(R)-lipoyl]-L-lysyl-[glycine-cleavage complex H protein] + glycine + H(+) = N(6)-[(R)-S(8)-aminomethyldihydrolipoyl]-L-lysyl-[glycine-cleavage complex H protein] + CO2. Its function is as follows. The glycine cleavage system catalyzes the degradation of glycine. The P protein binds the alpha-amino group of glycine through its pyridoxal phosphate cofactor; CO(2) is released and the remaining methylamine moiety is then transferred to the lipoamide cofactor of the H protein. In Rhizobium meliloti (strain 1021) (Ensifer meliloti), this protein is Glycine dehydrogenase (decarboxylating).